The primary structure comprises 602 residues: Peptide-N(4)-(N-acetyl-beta-glucosaminyl)asparagine amidase (602 aa).

Residues P2–G130 enclose the Thioredoxin domain. Residues C189, C192, C222, and C225 each contribute to the Zn(2+) site. Catalysis depends on C248, which acts as the Nucleophile. Residues H275 and D292 contribute to the active site. In terms of domain architecture, PAW spans D400–K602.

Belongs to the transglutaminase-like superfamily. PNGase family. Requires Zn(2+) as cofactor.

The protein localises to the cytoplasm. It localises to the endoplasmic reticulum. It catalyses the reaction Hydrolysis of an N(4)-(acetyl-beta-D-glucosaminyl)asparagine residue in which the glucosamine residue may be further glycosylated, to yield a (substituted) N-acetyl-beta-D-glucosaminylamine and a peptide containing an aspartate residue.. In terms of biological role, specifically deglycosylates the denatured form of N-linked glycoproteins in the cytoplasm and assists their proteasome-mediated degradation. Cleaves the beta-aspartyl-glucosamine (GlcNAc) of the glycan and the amide side chain of Asn, converting Asn to Asp. Prefers proteins containing high-mannose over those bearing complex type oligosaccharides. Can recognize misfolded proteins in the endoplasmic reticulum that are exported to the cytosol to be destroyed and deglycosylate them, while it has no activity toward native proteins. Deglycosylation is a prerequisite for subsequent proteasome-mediated degradation of some, but not all, misfolded glycoproteins. Also displays oxidoreductase (thioredoxin) activity. This is Peptide-N(4)-(N-acetyl-beta-glucosaminyl)asparagine amidase (png-1) from Caenorhabditis briggsae.